The sequence spans 534 residues: Probable inorganic phosphate transporter 1-8 (534 aa).

Residues 1–21 (MPIKVLSSLDVARTQWYHFKA) lie on the Cytoplasmic side of the membrane. The helical transmembrane segment at 22–42 (IIVAGMGLFTDAYDLFCIAPV) threads the bilayer. The Extracellular segment spans residues 43–61 (MKMISHVYYNGDSINTAVL). A helical membrane pass occupies residues 62 to 82 (STSYAIALLGTATGQLVFGYL). Topologically, residues 83–90 (GDRVGRRR) are cytoplasmic. Residues 91–111 (VYGLCLIIMILSSFGCGFSVC) form a helical membrane-spanning segment. Topologically, residues 112 to 123 (TTRRSCVMVSLG) are extracellular. Residues 124–144 (FFRFFLGLGIGGDYPLSATIM) traverse the membrane as a helical segment. At 145–153 (SEFANKRTR) the chain is on the cytoplasmic side. Residues 154-174 (GAFIAAVFSMQGLGILVSSAV) traverse the membrane as a helical segment. The Extracellular segment spans residues 175–199 (TMAVCVAFKRSGGGLEVDAAAPTEA). Residues 200-220 (DLAWRLILMIGALPAALTFYW) traverse the membrane as a helical segment. The Cytoplasmic segment spans residues 221 to 281 (RMLMPETARY…KLFSRCFFRL (61 aa)). Residues 282–302 (HGRDLFAASFNWFLVDIVFYT) form a helical membrane-spanning segment. Residues 303 to 333 (SNLLLSHIFSHYSKKPSTAENVYDAAFEVAE) are Extracellular-facing. A helical transmembrane segment spans residues 334-354 (LGAIIAACSTIPGYWFTVYFI). Topologically, residues 355-361 (DKIGRVK) are cytoplasmic. The helical transmembrane segment at 362–382 (IQIMGFFFMAVIYLVAGIPYS) threads the bilayer. The Extracellular portion of the chain corresponds to 383-396 (WYWSKHEHNNKGFM). The helical transmembrane segment at 397 to 417 (VLYGLVFFFCNFGPNTTTFII) threads the bilayer. At 418 to 431 (PAEHFPARFRSTCH) the chain is on the cytoplasmic side. The chain crosses the membrane as a helical span at residues 432 to 452 (GISGAAGKLGAIVGTVGFLWA). Topologically, residues 453–472 (TKKMESDDKNQIYPEVNRMR) are extracellular. A helical membrane pass occupies residues 473 to 493 (IAFLILGGVCIAGILVTYFFT). The Cytoplasmic portion of the chain corresponds to 494–534 (KETMGRSLEENEHDQDNNAESEDEPQIVDGQSSVSTLLQTR). The segment at 501–534 (LEENEHDQDNNAESEDEPQIVDGQSSVSTLLQTR) is disordered. A compositionally biased stretch (acidic residues) spans 510–519 (NNAESEDEPQ). Ser514 is modified (phosphoserine). Residues 522 to 534 (DGQSSVSTLLQTR) show a composition bias toward polar residues.

The protein belongs to the major facilitator superfamily. Phosphate:H(+) symporter (TC 2.A.1.9) family. As to expression, in roots.

The protein localises to the membrane. In terms of biological role, high-affinity transporter for external inorganic phosphate. This Arabidopsis thaliana (Mouse-ear cress) protein is Probable inorganic phosphate transporter 1-8 (PHT1-8).